The following is a 478-amino-acid chain: UDP-N-acetylmuramate--L-alanine ligase (478 aa).

ATP is bound at residue 130–136; the sequence is GTHGKTT.

The protein belongs to the MurCDEF family.

It localises to the cytoplasm. It carries out the reaction UDP-N-acetyl-alpha-D-muramate + L-alanine + ATP = UDP-N-acetyl-alpha-D-muramoyl-L-alanine + ADP + phosphate + H(+). Its pathway is cell wall biogenesis; peptidoglycan biosynthesis. In terms of biological role, cell wall formation. In Microcystis aeruginosa (strain NIES-843 / IAM M-2473), this protein is UDP-N-acetylmuramate--L-alanine ligase.